Reading from the N-terminus, the 886-residue chain is DNA gyrase subunit A (886 aa).

In terms of domain architecture, Topo IIA-type catalytic spans 35–501 (LPDVRDGLKP…GFEDLEDEDL (467 aa)). The O-(5'-phospho-DNA)-tyrosine intermediate role is filled by tyrosine 123. Residues 528 to 534 (QNRGGRG) carry the GyrA-box motif. Residues 810-860 (VKEDADEENEDEQSTVSEDGTEQQREAVVNDETPGNAIHTEVIDSEVNDED) are disordered. The segment covering 813 to 822 (DADEENEDEQ) has biased composition (acidic residues).

The protein belongs to the type II topoisomerase GyrA/ParC subunit family. As to quaternary structure, heterotetramer, composed of two GyrA and two GyrB chains. In the heterotetramer, GyrA contains the active site tyrosine that forms a transient covalent intermediate with DNA, while GyrB binds cofactors and catalyzes ATP hydrolysis.

The protein resides in the cytoplasm. It catalyses the reaction ATP-dependent breakage, passage and rejoining of double-stranded DNA.. Functionally, a type II topoisomerase that negatively supercoils closed circular double-stranded (ds) DNA in an ATP-dependent manner to modulate DNA topology and maintain chromosomes in an underwound state. Negative supercoiling favors strand separation, and DNA replication, transcription, recombination and repair, all of which involve strand separation. Also able to catalyze the interconversion of other topological isomers of dsDNA rings, including catenanes and knotted rings. Type II topoisomerases break and join 2 DNA strands simultaneously in an ATP-dependent manner. This Staphylococcus aureus (strain MRSA252) protein is DNA gyrase subunit A.